Consider the following 217-residue polypeptide: Small ribosomal subunit protein uS3 (217 aa).

The region spanning 38-106 (IRKFVQKELA…QVHINIIEIK (69 aa)) is the KH type-2 domain.

Belongs to the universal ribosomal protein uS3 family. Part of the 30S ribosomal subunit. Forms a tight complex with proteins S10 and S14.

Functionally, binds the lower part of the 30S subunit head. Binds mRNA in the 70S ribosome, positioning it for translation. The polypeptide is Small ribosomal subunit protein uS3 (Streptococcus sanguinis (strain SK36)).